The following is a 312-amino-acid chain: Ribosomal protein L11 methyltransferase (312 aa).

S-adenosyl-L-methionine is bound by residues T162, G183, D205, and N248.

Belongs to the methyltransferase superfamily. PrmA family.

It is found in the cytoplasm. The enzyme catalyses L-lysyl-[protein] + 3 S-adenosyl-L-methionine = N(6),N(6),N(6)-trimethyl-L-lysyl-[protein] + 3 S-adenosyl-L-homocysteine + 3 H(+). Its function is as follows. Methylates ribosomal protein L11. The chain is Ribosomal protein L11 methyltransferase from Bacillus cereus (strain ATCC 10987 / NRS 248).